We begin with the raw amino-acid sequence, 861 residues long: Bifunctional uridylyltransferase/uridylyl-removing enzyme (861 aa).

The segment at 1–321 (MKNDNRIIKN…VYHQKQKIIR (321 aa)) is uridylyltransferase. The segment at 322–678 (LDDEFQLSNR…IMPHHSQGGT (357 aa)) is uridylyl-removing. The 123-residue stretch at 440–562 (VDQHTLFVIR…LPHARYLDYL (123 aa)) folds into the HD domain. ACT domains lie at 679-760 (EVFI…AVSR) and 788-861 (QLFL…KSKY).

This sequence belongs to the GlnD family. It depends on Mg(2+) as a cofactor.

It carries out the reaction [protein-PII]-L-tyrosine + UTP = [protein-PII]-uridylyl-L-tyrosine + diphosphate. It catalyses the reaction [protein-PII]-uridylyl-L-tyrosine + H2O = [protein-PII]-L-tyrosine + UMP + H(+). With respect to regulation, uridylyltransferase (UTase) activity is inhibited by glutamine, while glutamine activates uridylyl-removing (UR) activity. Functionally, modifies, by uridylylation and deuridylylation, the PII regulatory proteins (GlnB and homologs), in response to the nitrogen status of the cell that GlnD senses through the glutamine level. Under low glutamine levels, catalyzes the conversion of the PII proteins and UTP to PII-UMP and PPi, while under higher glutamine levels, GlnD hydrolyzes PII-UMP to PII and UMP (deuridylylation). Thus, controls uridylylation state and activity of the PII proteins, and plays an important role in the regulation of nitrogen assimilation and metabolism. This Legionella pneumophila (strain Paris) protein is Bifunctional uridylyltransferase/uridylyl-removing enzyme.